The primary structure comprises 372 residues: tRNA-specific 2-thiouridylase MnmA (372 aa).

ATP-binding positions include 16–23 (GMSGGVDS) and methionine 42. Positions 102–104 (NPD) are interaction with target base in tRNA. Cysteine 107 (nucleophile) is an active-site residue. A disulfide bond links cysteine 107 and cysteine 205. Glycine 132 contacts ATP. Positions 155-157 (KDQ) are interaction with tRNA. Cysteine 205 acts as the Cysteine persulfide intermediate in catalysis. An interaction with tRNA region spans residues 317–318 (RY).

The protein belongs to the MnmA/TRMU family.

The protein resides in the cytoplasm. It catalyses the reaction S-sulfanyl-L-cysteinyl-[protein] + uridine(34) in tRNA + AH2 + ATP = 2-thiouridine(34) in tRNA + L-cysteinyl-[protein] + A + AMP + diphosphate + H(+). In terms of biological role, catalyzes the 2-thiolation of uridine at the wobble position (U34) of tRNA, leading to the formation of s(2)U34. The protein is tRNA-specific 2-thiouridylase MnmA of Shewanella sp. (strain MR-7).